The sequence spans 126 residues: 5-hydroxyisourate hydrolase (126 aa).

Substrate-binding residues include H16, R54, and Y123.

Belongs to the transthyretin family. 5-hydroxyisourate hydrolase subfamily. As to quaternary structure, homotetramer.

It carries out the reaction 5-hydroxyisourate + H2O = 5-hydroxy-2-oxo-4-ureido-2,5-dihydro-1H-imidazole-5-carboxylate + H(+). Catalyzes the hydrolysis of 5-hydroxyisourate (HIU) to 2-oxo-4-hydroxy-4-carboxy-5-ureidoimidazoline (OHCU). This is 5-hydroxyisourate hydrolase from Pseudomonas aeruginosa (strain ATCC 15692 / DSM 22644 / CIP 104116 / JCM 14847 / LMG 12228 / 1C / PRS 101 / PAO1).